The chain runs to 57 residues: Sperm histone (57 aa).

The tract at residues Met-1–Tyr-57 is disordered. At Thr-9 the chain carries Phosphothreonine.

Belongs to the protamine P1 family. In terms of tissue distribution, testis.

It is found in the nucleus. Its subcellular location is the chromosome. Its function is as follows. Protamines substitute for histones in the chromatin of sperm during the haploid phase of spermatogenesis. They compact sperm DNA into a highly condensed, stable and inactive complex. The chain is Sperm histone from Coturnix japonica (Japanese quail).